Here is a 142-residue protein sequence, read N- to C-terminus: ATP synthase F(0) complex subunit C3, mitochondrial (142 aa).

A mitochondrion-targeting transit peptide spans 1–67; that stretch reads MFACAKLACT…REFQTSAISR (67 aa). Residues 83–103 form a helical membrane-spanning segment; sequence VGVAGSGAGIGTVFGSLIIGY. The residue at position 110 (Lys110) is an N6,N6,N6-trimethyllysine. Residues 118 to 138 form a helical membrane-spanning segment; the sequence is ILGFALSEAMGLFCLMVAFLI.

It belongs to the ATPase C chain family. In terms of assembly, F-type ATPases have 2 components, CF(1) - the catalytic core - and CF(0) - the membrane proton channel. CF(1) has five subunits: alpha(3), beta(3), gamma(1), delta(1), epsilon(1). CF(0) has three main subunits: a, b and c. Interacts with TMEM70 and TMEM242. Trimethylated by ATPSCKMT at Lys-110. Methylation is required for proper incorporation of the C subunit into the ATP synthase complex and mitochondrial respiration.

It is found in the mitochondrion membrane. Mitochondrial membrane ATP synthase (F(1)F(0) ATP synthase or Complex V) produces ATP from ADP in the presence of a proton gradient across the membrane which is generated by electron transport complexes of the respiratory chain. F-type ATPases consist of two structural domains, F(1) - containing the extramembraneous catalytic core and F(0) - containing the membrane proton channel, linked together by a central stalk and a peripheral stalk. During catalysis, ATP synthesis in the catalytic domain of F(1) is coupled via a rotary mechanism of the central stalk subunits to proton translocation. Part of the complex F(0) domain. A homomeric c-ring of probably 10 subunits is part of the complex rotary element. The polypeptide is ATP synthase F(0) complex subunit C3, mitochondrial (Pongo abelii (Sumatran orangutan)).